Reading from the N-terminus, the 284-residue chain is Bifunctional protein FolD (284 aa).

Residues 164 to 166, Ser189, and Ile230 contribute to the NADP(+) site; that span reads GRG.

It belongs to the tetrahydrofolate dehydrogenase/cyclohydrolase family. Homodimer.

The catalysed reaction is (6R)-5,10-methylene-5,6,7,8-tetrahydrofolate + NADP(+) = (6R)-5,10-methenyltetrahydrofolate + NADPH. The enzyme catalyses (6R)-5,10-methenyltetrahydrofolate + H2O = (6R)-10-formyltetrahydrofolate + H(+). The protein operates within one-carbon metabolism; tetrahydrofolate interconversion. Catalyzes the oxidation of 5,10-methylenetetrahydrofolate to 5,10-methenyltetrahydrofolate and then the hydrolysis of 5,10-methenyltetrahydrofolate to 10-formyltetrahydrofolate. This Desulforamulus reducens (strain ATCC BAA-1160 / DSM 100696 / MI-1) (Desulfotomaculum reducens) protein is Bifunctional protein FolD.